Reading from the N-terminus, the 358-residue chain is NADH-quinone oxidoreductase subunit H (358 aa).

8 helical membrane passes run 20 to 40 (ITVGLVVSVIVKIVIILIPLI), 95 to 115 (ALFYIGPIMSLAPSFAAWAVI), 128 to 148 (IGLLYILMITSLSVYGVIIAG), 168 to 188 (ISYEIAMSAALVCVVMVSGSM), 206 to 226 (VFSWNWLPLFPIFIVYLISAV), 253 to 273 (GFAFALFFLAEYIFMILIAAL), 295 to 315 (TPSAFWMFAKMAAVLYWYLWI), and 334 to 354 (VLIPIGFAYIVILGVWMISPL).

This sequence belongs to the complex I subunit 1 family. In terms of assembly, NDH-1 is composed of 14 different subunits. Subunits NuoA, H, J, K, L, M, N constitute the membrane sector of the complex.

It is found in the cell inner membrane. The enzyme catalyses a quinone + NADH + 5 H(+)(in) = a quinol + NAD(+) + 4 H(+)(out). In terms of biological role, NDH-1 shuttles electrons from NADH, via FMN and iron-sulfur (Fe-S) centers, to quinones in the respiratory chain. The immediate electron acceptor for the enzyme in this species is believed to be ubiquinone. Couples the redox reaction to proton translocation (for every two electrons transferred, four hydrogen ions are translocated across the cytoplasmic membrane), and thus conserves the redox energy in a proton gradient. This subunit may bind ubiquinone. The protein is NADH-quinone oxidoreductase subunit H of Neisseria meningitidis serogroup B (strain ATCC BAA-335 / MC58).